Consider the following 321-residue polypeptide: Ribosomal RNA small subunit methyltransferase H (321 aa).

S-adenosyl-L-methionine contacts are provided by residues 42-44 (GGH), aspartate 62, phenylalanine 86, aspartate 107, and glutamine 114.

The protein belongs to the methyltransferase superfamily. RsmH family.

It localises to the cytoplasm. It carries out the reaction cytidine(1402) in 16S rRNA + S-adenosyl-L-methionine = N(4)-methylcytidine(1402) in 16S rRNA + S-adenosyl-L-homocysteine + H(+). Its function is as follows. Specifically methylates the N4 position of cytidine in position 1402 (C1402) of 16S rRNA. The chain is Ribosomal RNA small subunit methyltransferase H from Herminiimonas arsenicoxydans.